A 407-amino-acid polypeptide reads, in one-letter code: Serine/threonine-protein kinase GRIK2 (407 aa).

Residues 21–64 are disordered; sequence SGSRNQQSPKPYDDDTHSCDSDVTSTARGEEEEDEEEVEQKSRS. Positions 31-40 are enriched in basic and acidic residues; it reads PYDDDTHSCD. In terms of domain architecture, Protein kinase spans 107–370; that stretch reads YVRVCKIGSG…LKNVSEHPWV (264 aa). ATP contacts are provided by residues 113–121 and Lys136; that span reads IGSGSYGKV. The residue at position 153 (Thr153) is a Phosphothreonine; by autocatalysis. Asp238 functions as the Proton acceptor in the catalytic mechanism. Residue Ser260 is modified to Phosphoserine; by KIN10.

Belongs to the protein kinase superfamily. Ser/Thr protein kinase family. In terms of assembly, associates with the SNF1-related protein kinase (SnRK) complex. Interacts with AL1, a geminivirus (TGMV) protein essential for viral replication. Expressed in shoot apical meristem, leaf primordium and emerging petiole (at protein level).

The catalysed reaction is L-seryl-[protein] + ATP = O-phospho-L-seryl-[protein] + ADP + H(+). The enzyme catalyses L-threonyl-[protein] + ATP = O-phospho-L-threonyl-[protein] + ADP + H(+). Activated when autophosphorylated at Thr-153 and inactivated when phosphorylated at Ser-260 by SnRK1.1/KIN10. Activates SnRK1.1/KIN10 and SnRK1.2/KIN11 by phosphorylation of their activation-loop 'Thr-198' and 'Thr-176', respectively. Required for the regulation by SnRK1 kinases of the transcription of a large set of genes, the modification the activity of metabolic enzymes, and the control of various nutrient-responsive cellular developmental processes. The polypeptide is Serine/threonine-protein kinase GRIK2 (GRIK2) (Arabidopsis thaliana (Mouse-ear cress)).